A 686-amino-acid polypeptide reads, in one-letter code: Glycine--tRNA ligase beta subunit (686 aa).

The segment at Ala-65–Thr-99 is disordered. The segment covering Ser-67–Glu-84 has biased composition (basic and acidic residues).

It belongs to the class-II aminoacyl-tRNA synthetase family. As to quaternary structure, tetramer of two alpha and two beta subunits.

It localises to the cytoplasm. It carries out the reaction tRNA(Gly) + glycine + ATP = glycyl-tRNA(Gly) + AMP + diphosphate. In Leuconostoc citreum (strain KM20), this protein is Glycine--tRNA ligase beta subunit.